Reading from the N-terminus, the 509-residue chain is FAD-linked oxidoreductase anuG (509 aa).

Positions 1–21 are cleaved as a signal peptide; sequence MVQISNVWGFGLAIMASLAAA. Residues 75-246 form the FAD-binding PCMH-type domain; it reads YAAPKFTVVV…TSFEMSIYPT (172 aa).

It belongs to the oxygen-dependent FAD-linked oxidoreductase family. The cofactor is FAD.

It carries out the reaction (2S,9S)-annullatin H + 2 A = (2S,9S)-annullatin D + 2 AH2. The protein operates within secondary metabolite biosynthesis. Functionally, cytochrome P450 monooxygenase; part of the gene cluster that mediates the biosynthesis of annullatin D, an alkylated aromatic polyketide with a fused dihydrobenzofuran lactone ring system that exhibits potent agonistic activities toward the cannabinoid receptors. Within the pathway, anuG is responsible for the five-member lactone ring formation in (2S, 9S)-annullatin D via oxidative lactonization between the two hydroxyl groups. The annullatin backbone 2-hydroxymethyl-3-pentylphenol is assembled from one acetyl-CoA starter unit and 5 malonyl-CoA elongation units by cooperation of the highly reducing polyketide synthase anuA, the short-chain dehydrogenase anuB and the oxidoreductase anuC, before being hydroxylated at the C-5 alkyl chain by the cytochrome P450 monooxygenase anuE to form (8S)-annullatin E. The prenyltransferase anuH subsequently installs one isoprenyl group at the benzene ring to form (8S)-annullatin J. Enzymatic or nonenzymatic dihydro-benzofuran ring formation between the prenyl and the phenolic hydroxyl groups in (8S)-annullatin J results in two diastereomers (2S,9S)-annullatin H and compound 12. The intermediate (2S,9S)-annullatin H is then converted to (2S,9S)-annullatin D by the FAD-linked oxidoreductase anuG-catalyzed five-member lactone ring formation. The isomer 12 acts as a substrate for the short-chain dehydrogenase anuF and is oxidized to (2R)-annullatin F, which is subsequently acetylated by an acetyltransferase leading to (2R)-annullatin G formation. The remaining enzymes identified within the cluster, anuD, anuI and anuJ, seem not to be involved in annullatin biosynthesis. The protein is FAD-linked oxidoreductase anuG of Penicillium roqueforti (strain FM164).